The primary structure comprises 283 residues: DNA repair protein RecO (283 aa).

Residues serine 254–threonine 264 show a composition bias toward polar residues. Positions serine 254–arginine 283 are disordered.

Belongs to the RecO family.

Functionally, involved in DNA repair and RecF pathway recombination. This Roseiflexus sp. (strain RS-1) protein is DNA repair protein RecO.